Reading from the N-terminus, the 115-residue chain is MSYRCYVDIEDPIKKPVPINSKYQSWNPNHKNPYPNTFTQAPAPSHQIMVHYNGKPQLQTLSPYQGPQMFPVRETLPNPNNSYERKNCIAYPTTHSIPGPFLRSYIDLPYKSSMY.

This is an uncharacterized protein from Acanthamoeba polyphaga (Amoeba).